Reading from the N-terminus, the 467-residue chain is Sialic acid-binding Ig-like lectin 7 (467 aa).

Residues 1–18 (MLLLLLLPLLWGRERVEG) form the signal peptide. At 19–353 (QKSNRKDYSL…KMRPVSGVLL (335 aa)) the chain is on the extracellular side. One can recognise an Ig-like V-type domain in the interval 39–122 (GMCVHVRCSF…ARMSDAGRYF (84 aa)). The cysteines at positions 46 and 106 are disulfide-linked. The N-linked (GlcNAc...) asparagine glycan is linked to Asn105. N-acetylneuraminate contacts are provided by residues Arg124 and 131 to 135 (KWNYK). N-linked (GlcNAc...) asparagine glycans are attached at residues Asn142 and Asn165. The region spanning 150–233 (PNILIPGTLE…AGVTTNRTIQ (84 aa)) is the Ig-like C2-type 1 domain. The cysteines at positions 168 and 217 are disulfide-linked. Asn229, Asn235, Asn242, and Asn260 each carry an N-linked (GlcNAc...) asparagine glycan. An Ig-like C2-type 2 domain is found at 240 to 336 (PQNLTVTVFQ…GSQHVSLNLS (97 aa)). Residues Cys276 and Cys320 are joined by a disulfide bond. An N-linked (GlcNAc...) asparagine glycan is attached at Asn334. The helical transmembrane segment at 354–376 (GAVGGAGATALVFLSFCVIFIVV) threads the bilayer. Over 377 to 467 (RSCRKKSARP…NEYSEIKIPK (91 aa)) the chain is Cytoplasmic. Residues 401–412 (IRGSASQGNLTE) are compositionally biased toward polar residues. The segment at 401 to 431 (IRGSASQGNLTESWADDNPRHHGLAAHSSGE) is disordered. The residue at position 429 (Ser429) is a Phosphoserine. The ITIM motif motif lies at 435 to 440 (IQYAPL). The tract at residues 443 to 467 (HKGEPQDLSGQEATNNEYSEIKIPK) is disordered. Polar residues predominate over residues 450–460 (LSGQEATNNEY).

This sequence belongs to the immunoglobulin superfamily. SIGLEC (sialic acid binding Ig-like lectin) family. As to quaternary structure, interacts with PTPN6/SHP-1 upon phosphorylation. Tyrosine phosphorylated. As to expression, predominantly expressed by resting and activated natural killer cells and at lower levels by granulocytes and monocytes. High expression found in placenta, liver, lung, spleen, and peripheral blood leukocytes.

The protein localises to the membrane. Its function is as follows. Putative adhesion molecule that mediates sialic-acid dependent binding to cells. Preferentially binds to alpha-2,3- and alpha-2,6-linked sialic acid. Also binds disialogangliosides (disialogalactosyl globoside, disialyl lactotetraosylceramide and disialyl GalNAc lactotetraoslylceramide). The sialic acid recognition site may be masked by cis interactions with sialic acids on the same cell surface. In the immune response, may act as an inhibitory receptor upon ligand induced tyrosine phosphorylation by recruiting cytoplasmic phosphatase(s) via their SH2 domain(s) that block signal transduction through dephosphorylation of signaling molecules. Mediates inhibition of natural killer cells cytotoxicity. May play a role in hemopoiesis. Inhibits differentiation of CD34+ cell precursors towards myelomonocytic cell lineage and proliferation of leukemic myeloid cells (in vitro). This chain is Sialic acid-binding Ig-like lectin 7 (SIGLEC7), found in Homo sapiens (Human).